A 160-amino-acid chain; its full sequence is Putative pre-16S rRNA nuclease (160 aa).

This sequence belongs to the YqgF nuclease family.

It is found in the cytoplasm. In terms of biological role, could be a nuclease involved in processing of the 5'-end of pre-16S rRNA. This chain is Putative pre-16S rRNA nuclease, found in Rhodopseudomonas palustris (strain HaA2).